We begin with the raw amino-acid sequence, 250 residues long: Golgi SNAP receptor complex member 1 (250 aa).

Position 2 is an N-acetylalanine (alanine 2). Residues 2 to 229 (AAGTSNYWED…QRINLRKRRD (228 aa)) lie on the Cytoplasmic side of the membrane. The stretch at 10–30 (EDLRKQARQLENELDLKLVSF) forms a coiled coil. The disordered stretch occupies residues 39-59 (HSSARDGRRDRYSSDTTPLLN). A compositionally biased stretch (basic and acidic residues) spans 41–51 (SARDGRRDRYS). Residues 70–93 (MAIEIEQLLARLTGINDKMAEYTS) adopt a coiled-coil conformation. Phosphoserine is present on serine 141. The chain crosses the membrane as a helical; Anchor for type IV membrane protein span at residues 230-250 (SLILGGVIGVCTILLLLYAFH).

It belongs to the GOSR1 family. In terms of assembly, component of several multiprotein Golgi SNARE complexes. Identified in a SNARE complex with BET1, STX5 and YKT6, in a SNARE complex with BET1L, STX5 and YKT6, in a SNARE complex with STX5, GOSR2, SEC22B and BET1, and in complex with STX5 and COG3. Interacts with GABARAPL2.

Its subcellular location is the golgi apparatus membrane. Functionally, involved in transport from the ER to the Golgi apparatus as well as in intra-Golgi transport. It belongs to a super-family of proteins called t-SNAREs or soluble NSF (N-ethylmaleimide-sensitive factor) attachment protein receptor. May play a protective role against hydrogen peroxide induced cytotoxicity under glutathione depleted conditions in neuronal cells by regulating the intracellular ROS levels via inhibition of p38 MAPK (MAPK11, MAPK12, MAPK13 and MAPK14). Participates in docking and fusion stage of ER to cis-Golgi transport. Plays an important physiological role in VLDL-transport vesicle-Golgi fusion and thus in VLDL delivery to the hepatic cis-Golgi. This is Golgi SNAP receptor complex member 1 (GOSR1) from Bos taurus (Bovine).